A 152-amino-acid chain; its full sequence is Ubiquitin-activating enzyme E1 Y (152 aa).

The Glycyl thioester intermediate role is filled by Cys-51.

The protein belongs to the ubiquitin-activating E1 family. In terms of assembly, monomer.

It carries out the reaction ATP + ubiquitin + [E1 ubiquitin-activating enzyme]-L-cysteine = AMP + diphosphate + S-ubiquitinyl-[E1 ubiquitin-activating enzyme]-L-cysteine.. Its pathway is protein modification; protein ubiquitination. Functionally, activates ubiquitin by first adenylating its C-terminal glycine residue with ATP, and thereafter linking this residue to the side chain of a cysteine residue in E1, yielding a ubiquitin-E1 thioester and free AMP. The Y chromosome form could be involved in the survival and proliferation of differentiating spermatogonia. The polypeptide is Ubiquitin-activating enzyme E1 Y (UBE1Y) (Osphranter rufus (Red kangaroo)).